We begin with the raw amino-acid sequence, 94 residues long: Large ribosomal subunit protein uL23 (94 aa).

Belongs to the universal ribosomal protein uL23 family. Part of the 50S ribosomal subunit. Contacts protein L29, and trigger factor when it is bound to the ribosome.

Its function is as follows. One of the early assembly proteins it binds 23S rRNA. One of the proteins that surrounds the polypeptide exit tunnel on the outside of the ribosome. Forms the main docking site for trigger factor binding to the ribosome. The polypeptide is Large ribosomal subunit protein uL23 (Geobacter sp. (strain M21)).